The primary structure comprises 230 residues: Rab15 effector protein (230 aa).

Glycine 2 carries N-myristoyl glycine lipidation.

Interacts with the GTP-bound form of RAB15, RAB3A-D and RAB34.

It is found in the early endosome membrane. Effector that interacts with Rab GTPases in their active form (GTP-bound) including RAB15, RAB3A-D and RAB34. Controls downstream signaling such as cell proliferation and cell migration. Also regulates transferrin receptor recycling from the endocytic recycling compartment. The sequence is that of Rab15 effector protein from Mus musculus (Mouse).